The primary structure comprises 353 residues: Photosystem II protein D1 (353 aa).

Thr2 bears the N-acetylthreonine mark. Residue Thr2 is modified to Phosphothreonine. Transmembrane regions (helical) follow at residues 29 to 46, 118 to 133, and 142 to 156; these read YIGWFGVLMIPTLLTATS, HFLLGVACYMGREWEL, and WIAVAYSAPVAAATA. Residue His118 participates in chlorophyll a binding. A pheophytin a-binding site is contributed by Tyr126. 2 residues coordinate [CaMn4O5] cluster: Asp170 and Glu189. Residues 197-218 traverse the membrane as a helical segment; the sequence is FHMLGVAGVFGGSLFSAMHGSL. His198 provides a ligand contact to chlorophyll a. Residue His215 coordinates a quinone. Fe cation-binding residues include His215 and His272. Residues 274 to 288 form a helical membrane-spanning segment; the sequence is FLAAWPVVGIWFTAL. Positions 332, 333, 342, and 344 each coordinate [CaMn4O5] cluster. Positions 345-353 are excised as a propeptide; it reads AVEAPSING.

The protein belongs to the reaction center PufL/M/PsbA/D family. As to quaternary structure, PSII is composed of 1 copy each of membrane proteins PsbA, PsbB, PsbC, PsbD, PsbE, PsbF, PsbH, PsbI, PsbJ, PsbK, PsbL, PsbM, PsbT, PsbX, PsbY, PsbZ, Psb30/Ycf12, at least 3 peripheral proteins of the oxygen-evolving complex and a large number of cofactors. It forms dimeric complexes. The D1/D2 heterodimer binds P680, chlorophylls that are the primary electron donor of PSII, and subsequent electron acceptors. It shares a non-heme iron and each subunit binds pheophytin, quinone, additional chlorophylls, carotenoids and lipids. D1 provides most of the ligands for the Mn4-Ca-O5 cluster of the oxygen-evolving complex (OEC). There is also a Cl(-1) ion associated with D1 and D2, which is required for oxygen evolution. The PSII complex binds additional chlorophylls, carotenoids and specific lipids. serves as cofactor. Post-translationally, tyr-161 forms a radical intermediate that is referred to as redox-active TyrZ, YZ or Y-Z. C-terminally processed by CTPA; processing is essential to allow assembly of the oxygen-evolving complex and thus photosynthetic growth.

The protein resides in the plastid. The protein localises to the chloroplast thylakoid membrane. The enzyme catalyses 2 a plastoquinone + 4 hnu + 2 H2O = 2 a plastoquinol + O2. Its function is as follows. Photosystem II (PSII) is a light-driven water:plastoquinone oxidoreductase that uses light energy to abstract electrons from H(2)O, generating O(2) and a proton gradient subsequently used for ATP formation. It consists of a core antenna complex that captures photons, and an electron transfer chain that converts photonic excitation into a charge separation. The D1/D2 (PsbA/PsbD) reaction center heterodimer binds P680, the primary electron donor of PSII as well as several subsequent electron acceptors. This Brassica napus (Rape) protein is Photosystem II protein D1.